The sequence spans 618 residues: Methionine--tRNA ligase (618 aa).

The 'HIGH' region motif lies at 12–22; sequence YYVNAEPHLGH. Zn(2+) contacts are provided by Cys127, Cys130, Cys144, and His147. Positions 297-301 match the 'KMSKS' region motif; it reads KMSKT. Position 300 (Lys300) interacts with ATP. A tRNA-binding domain is found at 518-618; that stretch reads DFAKVELRVA…GEVPPGAVVK (101 aa).

It belongs to the class-I aminoacyl-tRNA synthetase family. MetG type 2A subfamily. Homodimer. The cofactor is Zn(2+).

The protein localises to the cytoplasm. It catalyses the reaction tRNA(Met) + L-methionine + ATP = L-methionyl-tRNA(Met) + AMP + diphosphate. Its function is as follows. Is required not only for elongation of protein synthesis but also for the initiation of all mRNA translation through initiator tRNA(fMet) aminoacylation. The protein is Methionine--tRNA ligase (metG) of Thermus thermophilus (strain ATCC 27634 / DSM 579 / HB8).